We begin with the raw amino-acid sequence, 525 residues long: MTENIHKHRILILDFGSQYTQLVARRVRELGVYCELWAWDVTEAQIRDFNPSGIILSGGPESTTEENSPRAPQYVFEAGVPVFGVCYGMQTMAMQLGGHVEGSNEREFGYAQVEVLTDSALVRGIEDSLTADGKPLLDVWMSHGDKVTAIPSDFVTVASTESCPFAIMANEEKRFYGVQFHPEVTHTRQGMRMLERFVRDICQCEALWTPAKIIDDAVARIREQVGDDKVILGLSGGVDSSVTAMLLHCAIGKNLTCVFVDNGLLRLNEAEQVMDMFGDHFGLNIVHVPAEERFLSALAGENDPEAKRKIIGRVFVEVFDEEALKLEDVKWLAQGTIYPDVIESAASATGKAHVIKSHHNVGGLPKEMKMGLVEPLKELFKDEVRKIGLELGLPYDMLYRHPFPGPGLGVRVLGEVKKEYCDLLRRADAIFIEELRKADLYDKVSQAFTVFLPVRSVGVMGDGRKYDWVVSLRAVETIDFMTAHWAHLPYDFLGRVSNRIINEVNGISRVVYDISGKPPATIEWE.

The Glutamine amidotransferase type-1 domain maps to 9–207 (RILILDFGSQ…VRDICQCEAL (199 aa)). The Nucleophile role is filled by Cys-86. Active-site residues include His-181 and Glu-183. The region spanning 208–400 (WTPAKIIDDA…LGLPYDMLYR (193 aa)) is the GMPS ATP-PPase domain. An ATP-binding site is contributed by 235-241 (SGGVDSS).

In terms of assembly, homodimer.

The enzyme catalyses XMP + L-glutamine + ATP + H2O = GMP + L-glutamate + AMP + diphosphate + 2 H(+). The protein operates within purine metabolism; GMP biosynthesis; GMP from XMP (L-Gln route): step 1/1. Functionally, catalyzes the synthesis of GMP from XMP. This is GMP synthase [glutamine-hydrolyzing] from Salmonella schwarzengrund (strain CVM19633).